The chain runs to 245 residues: Tetraspanin-6 (245 aa).

Residues 1–19 are Cytoplasmic-facing; the sequence is MASPSRRLQTKPVITCFKS. The helical transmembrane segment at 20 to 40 threads the bilayer; it reads VLLIYTFIFWITGVILLAVGI. Residues 41 to 59 are Extracellular-facing; it reads WGKVSLENYFSLLNEKATN. The helical transmembrane segment at 60–80 threads the bilayer; it reads VPFVLIATGTVIILLGTFGCF. Topologically, residues 81-93 are cytoplasmic; that stretch reads ATCRASAWMLKLY. The helical transmembrane segment at 94–114 threads the bilayer; it reads AMFLTLVFLVELVAAIVGFVF. Topologically, residues 115–208 are extracellular; it reads RHEIKNSFKN…IKVMTIIESE (94 aa). A glycan (N-linked (GlcNAc...) asparagine) is linked at Asn-134. A helical membrane pass occupies residues 209 to 229; that stretch reads MGVVAGISFGVACFQLIGIFL. Topologically, residues 230 to 245 are cytoplasmic; that stretch reads AYCLSRAITNNQYEIV.

Belongs to the tetraspanin (TM4SF) family.

Its subcellular location is the membrane. The protein is Tetraspanin-6 (TSPAN6) of Homo sapiens (Human).